The following is a 51-amino-acid chain: Sperm protamine P1 (51 aa).

The protein belongs to the protamine P1 family. As to quaternary structure, cross-linked by interchain disulfide bonds around the DNA-helix. As to expression, testis.

Its subcellular location is the nucleus. It is found in the chromosome. Protamines substitute for histones in the chromatin of sperm during the haploid phase of spermatogenesis. They compact sperm DNA into a highly condensed, stable and inactive complex. The protein is Sperm protamine P1 (PRM1) of Pongo pygmaeus (Bornean orangutan).